We begin with the raw amino-acid sequence, 662 residues long: DCC-interacting protein 13-beta (662 aa).

The required for RAB5A binding stretch occupies residues 1–428 (MPAVDKLLLE…NSDIEDDNIV (428 aa)). A BAR domain is found at 3–268 (AVDKLLLEEA…ESVYTPDIDV (266 aa)). The PH domain maps to 277 to 375 (LIQKTGYLNL…WICAVNNISR (99 aa)). Positions 486–635 (SLLQQMFIVR…LMLSVPLTND (150 aa)) constitute a PID domain. Residues 642–662 (NDQADDTGGSPSENRGAESEA) form a disordered region.

Homodimer. Homotetramer. Binds RAB5A/Rab5 through an N-terminal domain. This interaction is essential for its recruitment to endosomal membranes as well as its role in cell proliferation. Binds subunits of the NuRD/MeCP1 complex. Interacts with FSHR; interaction is independent of follicle stimulating hormone stimulation. Interacts with APPL1; the interaction is decreased by adiponectin in a time-dependent manner. Forms a complex comprising APPL1, RUVBL2, CTNNB1, HDAC1 and HDAC2; interaction reduces interaction between CTNNB1, HDAC1, HDAC2 and RUVBL2 leading to the decrease of deacetylase activity of this complex; affects the recruitment of repressive complexes to the Wnt target genes. Interacts (via BAR domain) with TBC1D1; interaction is dependent of TBC1D1 phosphorylation at 'Ser-235'; interaction diminishes the phosphorylation of TBC1D1 at 'Thr-596', resulting in inhibition of SLC2A4 translocation and glucose uptake. Interacts with ANXA2; targets APPL2 to endosomes and acting in parallel to RAB5A. Interacts with RAB31 (in GTP-bound form); interaction contributes to or enhances recruitment of APPL2 to the phagosomes; interaction enhances Fc-gamma receptor-mediated phagocytosis through PI3K/Akt signaling in macrophages. Interacts with PIK3R1; forms a complex with PIK3R1 and APPL1. Interacts (via BAR domain) with ADIPOR1; hinders the accessibility of APPL1 to ADIPOR1; negatively regulates adiponectin signaling; ADIPOQ dissociates this interaction and facilitates the recruitment of APPL1 to ADIPOR1. Interacts (via BAR domain) with ADIPOR2; ADIPOQ dissociates this interaction. Expressed in insulin-target tissues including skeletal muscle, liver, fat, and brain. Highly expressed in kidney and pancreas. Abundantly expressed in the ventromedial hypothalamus (VMH), barely detectable in the arcuate nucleus (ARC) and paraventricular nucleus (PVN) of the hypothalamus. Also expressed in pancreatic beta-cells.

The protein resides in the early endosome membrane. The protein localises to the nucleus. Its subcellular location is the cell membrane. It is found in the endosome membrane. It localises to the cytoplasm. The protein resides in the cytoplasmic vesicle. The protein localises to the phagosome. Its subcellular location is the cell projection. It is found in the ruffle. It localises to the ruffle membrane. The protein resides in the phagosome membrane. Multifunctional adapter protein that binds to various membrane receptors, nuclear factors and signaling proteins to regulate many processes, such as cell proliferation, immune response, endosomal trafficking and cell metabolism. Regulates signaling pathway leading to cell proliferation through interaction with RAB5A and subunits of the NuRD/MeCP1 complex. Plays a role in immune response by modulating phagocytosis, inflammatory and innate immune responses. In macrophages, enhances Fc-gamma receptor-mediated phagocytosis through interaction with RAB31 leading to activation of PI3K/Akt signaling. In response to LPS, modulates inflammatory responses by playing a key role on the regulation of TLR4 signaling and in the nuclear translocation of RELA/NF-kappa-B p65 and the secretion of pro- and anti-inflammatory cytokines. Also functions as a negative regulator of innate immune response via inhibition of AKT1 signaling pathway by forming a complex with APPL1 and PIK3R1. Plays a role in endosomal trafficking of TGFBR1 from the endosomes to the nucleus. Plays a role in cell metabolism by regulating adiponectin and insulin signaling pathways and adaptative thermogenesis. In muscle, negatively regulates adiponectin-simulated glucose uptake and fatty acid oxidation by inhibiting adiponectin signaling pathway through APPL1 sequestration thereby antagonizing APPL1 action. In muscles, negatively regulates insulin-induced plasma membrane recruitment of GLUT4 and glucose uptake through interaction with TBC1D1. Plays a role in cold and diet-induced adaptive thermogenesis by activating ventromedial hypothalamus (VMH) neurons throught AMPK inhibition which enhances sympathetic outflow to subcutaneous white adipose tissue (sWAT), sWAT beiging and cold tolerance. Also plays a role in other signaling pathways namely Wnt/beta-catenin, HGF and glucocorticoid receptor signaling. Positive regulator of beta-catenin/TCF-dependent transcription through direct interaction with RUVBL2/reptin resulting in the relief of RUVBL2-mediated repression of beta-catenin/TCF target genes by modulating the interactions within the beta-catenin-reptin-HDAC complex. May affect adult neurogenesis in hippocampus and olfactory system via regulating the sensitivity of glucocorticoid receptor. Required for fibroblast migration through HGF cell signaling. In Mus musculus (Mouse), this protein is DCC-interacting protein 13-beta.